We begin with the raw amino-acid sequence, 1210 residues long: A disintegrin and metalloproteinase with thrombospondin motifs 19 (1210 aa).

The N-terminal stretch at 1 to 30 (MGPEMRLTRICCCCCLLYQLGFLSHGTTSG) is a signal peptide. Residues 31 to 319 (LQLTPDLEEW…KIADNRREKR (289 aa)) constitute a propeptide that is removed on maturation. Residue Asn54 is glycosylated (N-linked (GlcNAc...) asparagine). A disordered region spans residues 55 to 166 (ATGLSGGSSD…PAQQEEPSAE (112 aa)). Residues 69–78 (RSSGGGGRGQ) are compositionally biased toward gly residues. The span at 84–98 (REVRSVARAPQEEAT) shows a compositional bias: basic and acidic residues. The segment covering 113 to 122 (GAEDEEELES) has biased composition (acidic residues). Positions 130–139 (SGDTALSSGT) are enriched in polar residues. Over residues 143–158 (WQPPLPPQRPSSPPPA) the composition is skewed to pro residues. Asn263 carries an N-linked (GlcNAc...) asparagine glycan. A Cysteine switch motif is present at residues 295 to 302 (HHCGVISD). Cys297 is a Zn(2+) binding site. In terms of domain architecture, Peptidase M12B spans 328–548 (YNIETVVVAD…KASSCLLHTD (221 aa)). 11 cysteine pairs are disulfide-bonded: Cys404/Cys469, Cys444/Cys451, Cys463/Cys543, Cys502/Cys527, Cys572/Cys596, Cys583/Cys604, Cys591/Cys623, Cys617/Cys628, Cys648/Cys683, Cys652/Cys688, and Cys663/Cys673. His485 is a Zn(2+) binding site. Glu486 is a catalytic residue. His489 and His495 together coordinate Zn(2+). The region spanning 549–636 (PQSLSSVLVP…ECTRRTPAPE (88 aa)) is the Disintegrin domain. The 53-residue stretch at 637–689 (HLAGEWSPWSSCSRSCSSGVSSRERKCPGLGSEARDCNGPRKQYRICENPPCP) folds into the TSP type-1 1 domain. A spacer region spans residues 794–917 (VIKGDFNHTR…PDNQSSKEPG (124 aa)). Asn800, Asn910, Asn931, Asn952, and Asn1012 each carry an N-linked (GlcNAc...) asparagine glycan. 4 consecutive TSP type-1 domains span residues 918 to 978 (PLFM…NEQP), 979 to 1040 (CQTR…QDCM), 1042 to 1086 (VWEA…EDCE), and 1090 to 1147 (KCYV…QPCN). 3 disulfide bridges follow: Cys991/Cys1034, Cys995/Cys1039, and Cys1006/Cys1023. Positions 1163-1202 (LTFKCLGDQWPVYCRVIREKNLCQDMRWYQRCCETCRDFY) constitute a PLAC domain.

It depends on Zn(2+) as a cofactor. The precursor is cleaved by a furin endopeptidase. In terms of processing, glycosylated. Can be O-fucosylated by POFUT2 on a serine or a threonine residue found within the consensus sequence C1-X(2)-(S/T)-C2-G of the TSP type-1 repeat domains where C1 and C2 are the first and second cysteine residue of the repeat, respectively. Fucosylated repeats can then be further glycosylated by the addition of a beta-1,3-glucose residue by the glucosyltransferase, B3GALTL. Fucosylation mediates the efficient secretion of ADAMTS family members. Can also be C-glycosylated with one or two mannose molecules on tryptophan residues within the consensus sequence W-X-X-W of the TPRs, and N-glycosylated. These other glycosylations can also facilitate secretion. In terms of tissue distribution, expressed predominantly in fetal ovary, low levels of expression is also detected in kidney, heart, skeletal muscle, lung and testis.

It is found in the secreted. The protein resides in the extracellular space. Its subcellular location is the extracellular matrix. This chain is A disintegrin and metalloproteinase with thrombospondin motifs 19 (Adamts19), found in Mus musculus (Mouse).